The chain runs to 530 residues: Probable glycerol-3-phosphate acyltransferase 2 (530 aa).

The next 3 membrane-spanning stretches (helical) occupy residues Tyr-70 to Leu-90, Phe-93 to Gly-113, and Leu-275 to Gly-295. The HXXXXD motif signature appears at His-339 to Asp-344.

The protein belongs to the GPAT/DAPAT family. As to expression, weakly or not expressed in roots, leaves, seedlings, developing siliques and flower buds.

It localises to the membrane. The enzyme catalyses sn-glycerol 3-phosphate + an acyl-CoA = a 1-acyl-sn-glycero-3-phosphate + CoA. It participates in phospholipid metabolism; CDP-diacylglycerol biosynthesis; CDP-diacylglycerol from sn-glycerol 3-phosphate: step 1/3. Functionally, esterifies acyl-group from acyl-ACP to the sn-1 position of glycerol-3-phosphate, an essential step in glycerolipid biosynthesis. This Arabidopsis thaliana (Mouse-ear cress) protein is Probable glycerol-3-phosphate acyltransferase 2 (GPAT2).